The following is a 273-amino-acid chain: Dermonecrotic toxin LdSicTox-alphaIB3b (273 aa).

His-5 is a catalytic residue. Mg(2+) is bound by residues Glu-25 and Asp-27. The active-site Nucleophile is the His-41. Cystine bridges form between Cys-45-Cys-51 and Cys-47-Cys-190. Residue Asp-85 participates in Mg(2+) binding.

The protein belongs to the arthropod phospholipase D family. Class II subfamily. The cofactor is Mg(2+). As to expression, expressed by the venom gland.

It localises to the secreted. The catalysed reaction is an N-(acyl)-sphingosylphosphocholine = an N-(acyl)-sphingosyl-1,3-cyclic phosphate + choline. It catalyses the reaction an N-(acyl)-sphingosylphosphoethanolamine = an N-(acyl)-sphingosyl-1,3-cyclic phosphate + ethanolamine. It carries out the reaction a 1-acyl-sn-glycero-3-phosphocholine = a 1-acyl-sn-glycero-2,3-cyclic phosphate + choline. The enzyme catalyses a 1-acyl-sn-glycero-3-phosphoethanolamine = a 1-acyl-sn-glycero-2,3-cyclic phosphate + ethanolamine. In terms of biological role, dermonecrotic toxins cleave the phosphodiester linkage between the phosphate and headgroup of certain phospholipids (sphingolipid and lysolipid substrates), forming an alcohol (often choline) and a cyclic phosphate. This toxin acts on sphingomyelin (SM). It may also act on ceramide phosphoethanolamine (CPE), lysophosphatidylcholine (LPC) and lysophosphatidylethanolamine (LPE), but not on lysophosphatidylserine (LPS), and lysophosphatidylglycerol (LPG). It acts by transphosphatidylation, releasing exclusively cyclic phosphate products as second products. Induces dermonecrosis, hemolysis, increased vascular permeability, edema, inflammatory response, and platelet aggregation. The sequence is that of Dermonecrotic toxin LdSicTox-alphaIB3b from Loxosceles deserta (Desert recluse spider).